The following is a 367-amino-acid chain: MTVYLLAGGGTAGHVNPLLAVADELRAREPGSTILVLGTREGLESRLVPARGYELLTIARLPFPRRPDGAAVRFAPAFARAVGQIRRMIAERGIDVVVGFGGYAAAPAYAAARRPGVPVVVHEANASPGLANRLGARVAAAVGITFPGTALGPRAEVVGMPLRREIATLDRAAVRDAARAELGLDADRPTLLVTGGSTGARSLNRTVVQVAERITATGAQILHIVGGAQEFTDPGVERYHVVGYSDRMELAIAAADLVVSRAGAGALSELTAVGVPAVYVPYPVGNGEQAVNVRGVVAAGGGIVVADADFTPDWVLAHVLPLLSDPAALARMSQAAASVGTRDGAARMADLVRDAVAARPSRPAARR.

UDP-N-acetyl-alpha-D-glucosamine-binding positions include 11–13 (TAG), asparagine 125, arginine 163, serine 197, and glutamine 289.

It belongs to the glycosyltransferase 28 family. MurG subfamily.

The protein resides in the cell membrane. It catalyses the reaction di-trans,octa-cis-undecaprenyl diphospho-N-acetyl-alpha-D-muramoyl-L-alanyl-D-glutamyl-meso-2,6-diaminopimeloyl-D-alanyl-D-alanine + UDP-N-acetyl-alpha-D-glucosamine = di-trans,octa-cis-undecaprenyl diphospho-[N-acetyl-alpha-D-glucosaminyl-(1-&gt;4)]-N-acetyl-alpha-D-muramoyl-L-alanyl-D-glutamyl-meso-2,6-diaminopimeloyl-D-alanyl-D-alanine + UDP + H(+). It participates in cell wall biogenesis; peptidoglycan biosynthesis. Cell wall formation. Catalyzes the transfer of a GlcNAc subunit on undecaprenyl-pyrophosphoryl-MurNAc-pentapeptide (lipid intermediate I) to form undecaprenyl-pyrophosphoryl-MurNAc-(pentapeptide)GlcNAc (lipid intermediate II). The polypeptide is UDP-N-acetylglucosamine--N-acetylmuramyl-(pentapeptide) pyrophosphoryl-undecaprenol N-acetylglucosamine transferase (Clavibacter michiganensis subsp. michiganensis (strain NCPPB 382)).